The primary structure comprises 241 residues: Sugar fermentation stimulation protein homolog (241 aa).

The protein belongs to the SfsA family.

The chain is Sugar fermentation stimulation protein homolog from Thermosynechococcus vestitus (strain NIES-2133 / IAM M-273 / BP-1).